A 441-amino-acid polypeptide reads, in one-letter code: Protein translocase subunit SecY (441 aa).

A run of 10 helical transmembrane segments spans residues 24–44 (LFVL…VPGI), 77–97 (ILAL…LLAT), 123–143 (ATVV…PNML), 152–172 (FSFY…LMWL), 181–201 (IGNG…PSAI), 215–235 (PLVL…VVFV), 272–292 (VMPA…TQWF), 313–333 (PLYL…YTAM), 373–393 (LIGG…TSAW), and 397–417 (FYFG…FIVQ).

This sequence belongs to the SecY/SEC61-alpha family. Component of the Sec protein translocase complex. Heterotrimer consisting of SecY, SecE and SecG subunits. The heterotrimers can form oligomers, although 1 heterotrimer is thought to be able to translocate proteins. Interacts with the ribosome. Interacts with SecDF, and other proteins may be involved. Interacts with SecA.

The protein localises to the cell inner membrane. Its function is as follows. The central subunit of the protein translocation channel SecYEG. Consists of two halves formed by TMs 1-5 and 6-10. These two domains form a lateral gate at the front which open onto the bilayer between TMs 2 and 7, and are clamped together by SecE at the back. The channel is closed by both a pore ring composed of hydrophobic SecY resides and a short helix (helix 2A) on the extracellular side of the membrane which forms a plug. The plug probably moves laterally to allow the channel to open. The ring and the pore may move independently. The sequence is that of Protein translocase subunit SecY from Haemophilus influenzae (strain ATCC 51907 / DSM 11121 / KW20 / Rd).